Here is a 242-residue protein sequence, read N- to C-terminus: Large ribosomal subunit protein uL1 (242 aa).

Belongs to the universal ribosomal protein uL1 family. Part of the 50S ribosomal subunit.

Its function is as follows. Binds directly to 23S rRNA. The L1 stalk is quite mobile in the ribosome, and is involved in E site tRNA release. In terms of biological role, protein L1 is also a translational repressor protein, it controls the translation of the L11 operon by binding to its mRNA. In Persephonella marina (strain DSM 14350 / EX-H1), this protein is Large ribosomal subunit protein uL1.